Here is a 102-residue protein sequence, read N- to C-terminus: Small ribosomal subunit protein uS10 (102 aa).

This sequence belongs to the universal ribosomal protein uS10 family. Part of the 30S ribosomal subunit.

In terms of biological role, involved in the binding of tRNA to the ribosomes. This chain is Small ribosomal subunit protein uS10, found in Desulforamulus reducens (strain ATCC BAA-1160 / DSM 100696 / MI-1) (Desulfotomaculum reducens).